The primary structure comprises 429 residues: Phosphomethylpyrimidine synthase (429 aa).

Residues N66, M94, Y123, H162, 184–186 (SRG), 225–228 (DALR), and E264 contribute to the substrate site. H268 lines the Zn(2+) pocket. Y291 contributes to the substrate binding site. H332 serves as a coordination point for Zn(2+). 3 residues coordinate [4Fe-4S] cluster: C408, C411, and C415.

It belongs to the ThiC family. [4Fe-4S] cluster serves as cofactor.

The catalysed reaction is 5-amino-1-(5-phospho-beta-D-ribosyl)imidazole + S-adenosyl-L-methionine = 4-amino-2-methyl-5-(phosphooxymethyl)pyrimidine + CO + 5'-deoxyadenosine + formate + L-methionine + 3 H(+). The protein operates within cofactor biosynthesis; thiamine diphosphate biosynthesis. Functionally, catalyzes the synthesis of the hydroxymethylpyrimidine phosphate (HMP-P) moiety of thiamine from aminoimidazole ribotide (AIR) in a radical S-adenosyl-L-methionine (SAM)-dependent reaction. This Sulfurisphaera tokodaii (strain DSM 16993 / JCM 10545 / NBRC 100140 / 7) (Sulfolobus tokodaii) protein is Phosphomethylpyrimidine synthase.